Reading from the N-terminus, the 277-residue chain is Type IV methyl-directed restriction enzyme EcoKMcrA (277 aa).

An HNH domain is found at Cys-207–Tyr-257.

Restriction of 5-methyl and 5-hydroxymethylcytosines at the specific DNA sequence 5'-C(me)CGG-3'. This Escherichia coli (strain K12) protein is Type IV methyl-directed restriction enzyme EcoKMcrA.